The following is a 105-amino-acid chain: Large ribosomal subunit protein uL24 (105 aa).

This sequence belongs to the universal ribosomal protein uL24 family. In terms of assembly, part of the 50S ribosomal subunit.

In terms of biological role, one of two assembly initiator proteins, it binds directly to the 5'-end of the 23S rRNA, where it nucleates assembly of the 50S subunit. Functionally, one of the proteins that surrounds the polypeptide exit tunnel on the outside of the subunit. This chain is Large ribosomal subunit protein uL24, found in Clostridium botulinum (strain 657 / Type Ba4).